A 183-amino-acid chain; its full sequence is ATP synthase subunit delta (183 aa).

It belongs to the ATPase delta chain family. In terms of assembly, F-type ATPases have 2 components, F(1) - the catalytic core - and F(0) - the membrane proton channel. F(1) has five subunits: alpha(3), beta(3), gamma(1), delta(1), epsilon(1). F(0) has three main subunits: a(1), b(2) and c(10-14). The alpha and beta chains form an alternating ring which encloses part of the gamma chain. F(1) is attached to F(0) by a central stalk formed by the gamma and epsilon chains, while a peripheral stalk is formed by the delta and b chains.

Its subcellular location is the cell inner membrane. Its function is as follows. F(1)F(0) ATP synthase produces ATP from ADP in the presence of a proton or sodium gradient. F-type ATPases consist of two structural domains, F(1) containing the extramembraneous catalytic core and F(0) containing the membrane proton channel, linked together by a central stalk and a peripheral stalk. During catalysis, ATP synthesis in the catalytic domain of F(1) is coupled via a rotary mechanism of the central stalk subunits to proton translocation. In terms of biological role, this protein is part of the stalk that links CF(0) to CF(1). It either transmits conformational changes from CF(0) to CF(1) or is implicated in proton conduction. In Thermotoga neapolitana (strain ATCC 49049 / DSM 4359 / NBRC 107923 / NS-E), this protein is ATP synthase subunit delta.